Consider the following 161-residue polypeptide: MTVLEIDLLDETKKLPDEDKQLVENILQFAAEYLKIEQGTELSLTFTTNEGIREINREYRDKDQATDVISFALEEMGDGETEIDWGEFDLETPRMLGDIIISTEKAEEQAKDYGHTKARELGFLAVHGLLHLLGYDHMEPDEEKVMFGLQKEVLDAYGLER.

Residues H127, H131, and H137 each coordinate Zn(2+).

The protein belongs to the endoribonuclease YbeY family. It depends on Zn(2+) as a cofactor.

The protein localises to the cytoplasm. Single strand-specific metallo-endoribonuclease involved in late-stage 70S ribosome quality control and in maturation of the 3' terminus of the 16S rRNA. This chain is Endoribonuclease YbeY, found in Listeria monocytogenes serotype 4a (strain HCC23).